The chain runs to 152 residues: Nucleoside diphosphate kinase B (152 aa).

An interaction with AKAP13 region spans residues Met-1–Lys-66. ATP-binding residues include Lys-12, Phe-60, Arg-88, Thr-94, Arg-105, and Asn-115. His-118 functions as the Pros-phosphohistidine intermediate in the catalytic mechanism.

The protein belongs to the NDK family. In terms of assembly, hexamer of two different chains: An and B (A6, A5B, A4B2, A3B3, A2B4, AB5, B6). Interacts with CAPN8. Interacts with AKAP13. Interacts with ITGB1BP1 (via C-terminal domain region). Interacts with BCL2L10. Requires Mg(2+) as cofactor.

It localises to the cytoplasm. The protein resides in the cell projection. The protein localises to the lamellipodium. It is found in the ruffle. Its subcellular location is the nucleus. The catalysed reaction is a 2'-deoxyribonucleoside 5'-diphosphate + ATP = a 2'-deoxyribonucleoside 5'-triphosphate + ADP. It catalyses the reaction a ribonucleoside 5'-diphosphate + ATP = a ribonucleoside 5'-triphosphate + ADP. The enzyme catalyses ATP + protein L-histidine = ADP + protein N-phospho-L-histidine.. Major role in the synthesis of nucleoside triphosphates other than ATP. The ATP gamma phosphate is transferred to the NDP beta phosphate via a ping-pong mechanism, using a phosphorylated active-site intermediate. Negatively regulates Rho activity by interacting with AKAP13/LBC. Acts as a transcriptional activator of the MYC gene; binds DNA non-specifically. Binds to both single-stranded guanine- and cytosine-rich strands within the nuclease hypersensitive element (NHE) III(1) region of the MYC gene promoter. Does not bind to duplex NHE III(1). Has G-quadruplex (G4) DNA-binding activity, which is independent of its nucleotide-binding and kinase activity. Binds both folded and unfolded G4 with similar low nanomolar affinities. Stabilizes folded G4s regardless of whether they are prefolded or not. Exhibits histidine protein kinase activity. The polypeptide is Nucleoside diphosphate kinase B (NME2) (Pongo abelii (Sumatran orangutan)).